A 348-amino-acid chain; its full sequence is uncharacterized protein (348 aa).

NADP(+) is bound by residues Lys41 and Tyr170. Residue Ser339 is modified to Phosphoserine.

Belongs to the NAD(P)-dependent epimerase/dehydratase family. Dihydroflavonol-4-reductase subfamily.

This is an uncharacterized protein from Saccharomyces cerevisiae (strain ATCC 204508 / S288c) (Baker's yeast).